The primary structure comprises 380 residues: Chaperone protein DnaJ (380 aa).

The 68-residue stretch at 5 to 72 (DFYEVLGVAK…NKRAAYDQYG (68 aa)) folds into the J domain. The segment at 140–218 (GKDAQIRIPS…CGGQGKVKRQ (79 aa)) adopts a CR-type zinc-finger fold. Zn(2+) is bound by residues Cys-153, Cys-156, Cys-170, Cys-173, Cys-192, Cys-195, Cys-206, and Cys-209. CXXCXGXG motif repeat units lie at residues 153–160 (CDTCHGSG), 170–177 (CTTCNGMG), 192–199 (CPHCRGTG), and 206–213 (CTSCGGQG). The segment at 359–380 (KGGAKHSPSGESWTDRLKSFFS) is disordered. Residues 371–380 (WTDRLKSFFS) show a composition bias toward basic and acidic residues.

This sequence belongs to the DnaJ family. As to quaternary structure, homodimer. Requires Zn(2+) as cofactor.

It localises to the cytoplasm. Functionally, participates actively in the response to hyperosmotic and heat shock by preventing the aggregation of stress-denatured proteins and by disaggregating proteins, also in an autonomous, DnaK-independent fashion. Unfolded proteins bind initially to DnaJ; upon interaction with the DnaJ-bound protein, DnaK hydrolyzes its bound ATP, resulting in the formation of a stable complex. GrpE releases ADP from DnaK; ATP binding to DnaK triggers the release of the substrate protein, thus completing the reaction cycle. Several rounds of ATP-dependent interactions between DnaJ, DnaK and GrpE are required for fully efficient folding. Also involved, together with DnaK and GrpE, in the DNA replication of plasmids through activation of initiation proteins. In Delftia acidovorans (strain DSM 14801 / SPH-1), this protein is Chaperone protein DnaJ.